We begin with the raw amino-acid sequence, 217 residues long: Cytidylate kinase (217 aa).

11 to 19 (GPAGAGKST) lines the ATP pocket.

The protein belongs to the cytidylate kinase family. Type 1 subfamily.

The protein resides in the cytoplasm. The catalysed reaction is CMP + ATP = CDP + ADP. It catalyses the reaction dCMP + ATP = dCDP + ADP. In Clostridium perfringens (strain ATCC 13124 / DSM 756 / JCM 1290 / NCIMB 6125 / NCTC 8237 / Type A), this protein is Cytidylate kinase.